The sequence spans 306 residues: Non-specific ribonucleoside hydrolase RihC (306 aa).

His235 is an active-site residue.

This sequence belongs to the IUNH family. RihC subfamily.

Its function is as follows. Hydrolyzes both purine and pyrimidine ribonucleosides with a broad-substrate specificity. This Salmonella schwarzengrund (strain CVM19633) protein is Non-specific ribonucleoside hydrolase RihC.